The following is a 125-amino-acid chain: PCNA-associated factor (125 aa).

The segment at 1–125 is disordered; the sequence is MVRTKADSAG…SEEAADSDDE (125 aa). The span at 8-17 shows a compositional bias: low complexity; the sequence is SAGSSASSGS. The D-box signature appears at 28 to 39; sequence RKTFGSSSSGSN. The short motif at 68-79 is the PIP-box element; sequence QKGIGEFFGSPS. The KEN box signature appears at 85–87; the sequence is KEN. Positions 95-107 match the Initiation motif motif; that stretch reads EAGGSGAGKAPRK. The span at 115-125 shows a compositional bias: acidic residues; it reads PSEEAADSDDE.

In terms of assembly, interacts with pcna.

Its subcellular location is the nucleus. The protein resides in the cytoplasm. It localises to the perinuclear region. Functionally, PCNA-binding protein that acts as a regulator of DNA repair during DNA replication. Following DNA damage, the interaction with pcna is disrupted, facilitating the interaction between monoubiquitinated pcna and the translesion DNA synthesis DNA polymerase eta (polh) at stalled replisomes, facilitating the bypass of replication-fork-blocking lesions. Also acts as a regulator of centrosome number. This chain is PCNA-associated factor, found in Xenopus tropicalis (Western clawed frog).